Here is a 366-residue protein sequence, read N- to C-terminus: MITLQRTPLFDVYAKYGGKTIDFGGWELPVQFSSIKEEHEAVRTAAGLFDVSHMGEVEVKGVDSLAFLQRVVTNDVSTLKVGGAQYTAMCYENGGTVDDLLIYKRGEEDYLLVINASNIEKDYEWLASHVIGDATVVNVSSEVAQLAIQGPKAEGILQKVVSEDLKEIKFFKFKNNILVDGIPALVSRTGYTGEDGFEIYCKSEDAAKLWEKLLEVGAEEGLKACGLGARDTLRFEATLPLYGQELSKDITPIEAGIGFAVKTNKEADFFGKATLKEQKENGAPRKLVGIEVIERGIPRTHYPVFIGEEKIGEVTSGTQSPTLKKSIGLALIDVKYAAVDTEVEIEIRNKRVKAVVVPTPFYKRSK.

It belongs to the GcvT family. In terms of assembly, the glycine cleavage system is composed of four proteins: P, T, L and H.

The catalysed reaction is N(6)-[(R)-S(8)-aminomethyldihydrolipoyl]-L-lysyl-[protein] + (6S)-5,6,7,8-tetrahydrofolate = N(6)-[(R)-dihydrolipoyl]-L-lysyl-[protein] + (6R)-5,10-methylene-5,6,7,8-tetrahydrofolate + NH4(+). The glycine cleavage system catalyzes the degradation of glycine. The protein is Aminomethyltransferase of Bacillus cereus (strain G9842).